A 208-amino-acid polypeptide reads, in one-letter code: NAD(P)H-quinone oxidoreductase subunit I (208 aa).

2 consecutive 4Fe-4S ferredoxin-type domains span residues 55-84 and 95-124; these read GRIHYEFDKCIACEVCVRVCPINLPVVDWV and RNYSIDFGVCIFCGNCVEYCPTNCLSMTEE. Residues Cys64, Cys67, Cys70, Cys74, Cys104, Cys107, Cys110, and Cys114 each contribute to the [4Fe-4S] cluster site.

This sequence belongs to the complex I 23 kDa subunit family. In terms of assembly, NDH-1 is composed of at least 11 different subunits. Requires [4Fe-4S] cluster as cofactor.

It localises to the cellular thylakoid membrane. It catalyses the reaction a plastoquinone + NADH + (n+1) H(+)(in) = a plastoquinol + NAD(+) + n H(+)(out). The enzyme catalyses a plastoquinone + NADPH + (n+1) H(+)(in) = a plastoquinol + NADP(+) + n H(+)(out). NDH-1 shuttles electrons from an unknown electron donor, via FMN and iron-sulfur (Fe-S) centers, to quinones in the respiratory and/or the photosynthetic chain. The immediate electron acceptor for the enzyme in this species is believed to be plastoquinone. Couples the redox reaction to proton translocation, and thus conserves the redox energy in a proton gradient. The chain is NAD(P)H-quinone oxidoreductase subunit I from Prochlorococcus marinus (strain MIT 9515).